The chain runs to 76 residues: Acyl carrier protein (76 aa).

Residues 1–76 enclose the Carrier domain; it reads MSIEERVKKI…SAIDYVQNNQ (76 aa). The residue at position 36 (Ser36) is an O-(pantetheine 4'-phosphoryl)serine.

Belongs to the acyl carrier protein (ACP) family. In terms of processing, 4'-phosphopantetheine is transferred from CoA to a specific serine of apo-ACP by AcpS. This modification is essential for activity because fatty acids are bound in thioester linkage to the sulfhydryl of the prosthetic group.

The protein resides in the cytoplasm. The protein operates within lipid metabolism; fatty acid biosynthesis. In terms of biological role, carrier of the growing fatty acid chain in fatty acid biosynthesis. The sequence is that of Acyl carrier protein from Histophilus somni (strain 129Pt) (Haemophilus somnus).